The primary structure comprises 280 residues: Urease accessory protein UreD (280 aa).

Belongs to the UreD family. UreD, UreF and UreG form a complex that acts as a GTP-hydrolysis-dependent molecular chaperone, activating the urease apoprotein by helping to assemble the nickel containing metallocenter of UreC. The UreE protein probably delivers the nickel.

It localises to the cytoplasm. Required for maturation of urease via the functional incorporation of the urease nickel metallocenter. The polypeptide is Urease accessory protein UreD (Mesorhizobium japonicum (strain LMG 29417 / CECT 9101 / MAFF 303099) (Mesorhizobium loti (strain MAFF 303099))).